We begin with the raw amino-acid sequence, 226 residues long: Peroxiredoxin-like 2C (226 aa).

The disordered stretch occupies residues 1 to 24 (MAAPVTRQVSGCAGRVPSPAGSVT).

This sequence belongs to the peroxiredoxin-like PRXL2 family. PRXL2C subfamily.

Functionally, may positively regulate ERK1/2 signaling and AKT1 activation leading to HIF1A up-regulation with an increased expression of glycolysis genes and enhanced glycolysis. The protein is Peroxiredoxin-like 2C (Prxl2c) of Mus musculus (Mouse).